A 320-amino-acid chain; its full sequence is Ferrochelatase (320 aa).

2 residues coordinate Fe cation: His194 and Glu275.

It belongs to the ferrochelatase family.

The protein resides in the cytoplasm. It carries out the reaction heme b + 2 H(+) = protoporphyrin IX + Fe(2+). It functions in the pathway porphyrin-containing compound metabolism; protoheme biosynthesis; protoheme from protoporphyrin-IX: step 1/1. Its function is as follows. Catalyzes the ferrous insertion into protoporphyrin IX. In Pectobacterium atrosepticum (strain SCRI 1043 / ATCC BAA-672) (Erwinia carotovora subsp. atroseptica), this protein is Ferrochelatase.